The chain runs to 130 residues: UPF0146 protein AF_0739.1 (130 aa).

The protein belongs to the UPF0146 family.

The protein is UPF0146 protein AF_0739.1 of Archaeoglobus fulgidus (strain ATCC 49558 / DSM 4304 / JCM 9628 / NBRC 100126 / VC-16).